Reading from the N-terminus, the 181-residue chain is RNA pyrophosphohydrolase (181 aa).

The Nudix hydrolase domain occupies 6–149 (GFRPNVGIIL…KRRVYTRALQ (144 aa)). Positions 38 to 59 (GGIKAQETPEEALFRELEEEVG) match the Nudix box motif. The segment at 159–181 (GLPRQPPVGRPRRSAPPRGCRRA) is disordered. The span at 168–181 (RPRRSAPPRGCRRA) shows a compositional bias: basic residues.

Belongs to the Nudix hydrolase family. RppH subfamily. Requires a divalent metal cation as cofactor.

Its function is as follows. Accelerates the degradation of transcripts by removing pyrophosphate from the 5'-end of triphosphorylated RNA, leading to a more labile monophosphorylated state that can stimulate subsequent ribonuclease cleavage. The sequence is that of RNA pyrophosphohydrolase from Alkalilimnicola ehrlichii (strain ATCC BAA-1101 / DSM 17681 / MLHE-1).